Reading from the N-terminus, the 230-residue chain is MPHHIVIVEDEPVTQARLQSYFTQEGYTVSVTASGAGLREIMQNQPVDLILLDINLPDENGLMLTRALRERSTVGIILVTGRSDRIDRIVGLEMGADDYVTKPLELRELVVRVKNLLWRIDLARQAQPYTQDNCYRFAGYCLNVSRHTLERDGEPIKLTRAEYEMLVAFVTNPGEILSRERLLRMLSARRVENPDLRTVDVLIRRLRHKLSADLLVTQHGEGYFLAADVC.

A Response regulatory domain is found at 4-117; that stretch reads HIVIVEDEPV…ELVVRVKNLL (114 aa). Residue Asp-53 is modified to 4-aspartylphosphate. Residues 132–227 constitute a DNA-binding region (ompR/PhoB-type); it reads DNCYRFAGYC…QHGEGYFLAA (96 aa).

Post-translationally, phosphorylated and dephosphorylated by TorS.

It localises to the cytoplasm. Its function is as follows. Member of the two-component regulatory system TorS/TorR involved in the anaerobic utilization of trimethylamine-N-oxide (TMAO). Phosphorylated TorR activates the transcription of the torCAD operon by binding to four decameric boxes located in the torCAD promoter. Box1, 2 and 4 contain the DNA sequence 5'-CTGTTCATAT-3' and box3 contains the DNA sequence 5'-CCGTTCATCC-3'. Phosphorylated as well as unphosphorylated TorR negatively regulates its own expression by binding to box1 and 2. The polypeptide is TorCAD operon transcriptional regulatory protein TorR (torR) (Escherichia coli O157:H7).